A 301-amino-acid polypeptide reads, in one-letter code: tRNA pseudouridine synthase B (301 aa).

Residue aspartate 45 is the Nucleophile of the active site.

The protein belongs to the pseudouridine synthase TruB family. Type 1 subfamily.

The catalysed reaction is uridine(55) in tRNA = pseudouridine(55) in tRNA. Functionally, responsible for synthesis of pseudouridine from uracil-55 in the psi GC loop of transfer RNAs. This is tRNA pseudouridine synthase B from Streptomyces coelicolor (strain ATCC BAA-471 / A3(2) / M145).